The following is a 295-amino-acid chain: GTPase Era (295 aa).

In terms of domain architecture, Era-type G spans 4-171; the sequence is KSGFVTIIGR…INLIVQYLPE (168 aa). Residues 12–19 are G1; that stretch reads GRPNVGKS. 12–19 is a GTP binding site; it reads GRPNVGKS. Residues 38–42 form a G2 region; that stretch reads QTTRN. The tract at residues 59–62 is G3; that stretch reads DTPG. GTP-binding positions include 59–63 and 121–124; these read DTPGI and NKID. The tract at residues 121 to 124 is G4; that stretch reads NKID. The interval 150-152 is G5; the sequence is ISA. In terms of domain architecture, KH type-2 spans 194-280; that stretch reads IREKILHYTD…YLELWVKVKE (87 aa).

Belongs to the TRAFAC class TrmE-Era-EngA-EngB-Septin-like GTPase superfamily. Era GTPase family. Monomer.

Its subcellular location is the cytoplasm. The protein resides in the cell membrane. An essential GTPase that binds both GDP and GTP, with rapid nucleotide exchange. Plays a role in 16S rRNA processing and 30S ribosomal subunit biogenesis and possibly also in cell cycle regulation and energy metabolism. This is GTPase Era from Alkaliphilus oremlandii (strain OhILAs) (Clostridium oremlandii (strain OhILAs)).